The primary structure comprises 202 residues: LexA repressor (202 aa).

Positions Arg28–Lys48 form a DNA-binding region, H-T-H motif. Catalysis depends on for autocatalytic cleavage activity residues Ser123 and Lys160.

The protein belongs to the peptidase S24 family. In terms of assembly, homodimer.

The enzyme catalyses Hydrolysis of Ala-|-Gly bond in repressor LexA.. Represses a number of genes involved in the response to DNA damage (SOS response), including recA and lexA. In the presence of single-stranded DNA, RecA interacts with LexA causing an autocatalytic cleavage which disrupts the DNA-binding part of LexA, leading to derepression of the SOS regulon and eventually DNA repair. This Pseudomonas chlororaphis (Pseudomonas aureofaciens) protein is LexA repressor.